The sequence spans 311 residues: HPr kinase/phosphorylase (311 aa).

Catalysis depends on residues His138 and Lys159. 153–160 (GKSGVGKS) provides a ligand contact to ATP. Ser160 is a binding site for Mg(2+). The Proton acceptor; for phosphorylation activity. Proton donor; for dephosphorylation activity role is filled by Asp177. The interval 201-210 (LEIRGLGIIN) is important for the catalytic mechanism of both phosphorylation and dephosphorylation. A Mg(2+)-binding site is contributed by Glu202. Arg243 is a catalytic residue. Residues 264-269 (PVRPGR) form an important for the catalytic mechanism of dephosphorylation region.

Belongs to the HPrK/P family. Homohexamer. Mg(2+) is required as a cofactor.

It catalyses the reaction [HPr protein]-L-serine + ATP = [HPr protein]-O-phospho-L-serine + ADP + H(+). It carries out the reaction [HPr protein]-O-phospho-L-serine + phosphate + H(+) = [HPr protein]-L-serine + diphosphate. Functionally, catalyzes the ATP- as well as the pyrophosphate-dependent phosphorylation of a specific serine residue in HPr, a phosphocarrier protein of the phosphoenolpyruvate-dependent sugar phosphotransferase system (PTS). HprK/P also catalyzes the pyrophosphate-producing, inorganic phosphate-dependent dephosphorylation (phosphorolysis) of seryl-phosphorylated HPr (P-Ser-HPr). The two antagonistic activities of HprK/P are regulated by several intracellular metabolites, which change their concentration in response to the absence or presence of rapidly metabolisable carbon sources (glucose, fructose, etc.) in the growth medium. Also phosphorylates/dephosphorylates the HPr-like catabolite repression protein crh on a specific serine residue. Therefore, by controlling the phosphorylation state of HPr and crh, HPrK/P is a sensor enzyme that plays a major role in the regulation of carbon metabolism and sugar transport: it mediates carbon catabolite repression (CCR), and regulates PTS-catalyzed carbohydrate uptake and inducer exclusion. The chain is HPr kinase/phosphorylase from Geobacillus sp. (strain WCH70).